Reading from the N-terminus, the 430-residue chain is MKTTIKQAKDHLNQDVTIGAWLTNKRSSGKIAFLQLRDGTGFMQGVVVKSEVDEEVFKLAKEITQESSLYVTGTITEDNRSDLGYEMQVKSIEVISEAHDYPITPKNHGTEFLMDHRHLWLRSKKQHAVMKIRNEVIRATYEFFNKDGFTKVDPPILTASAPEGTSELFHTKYFDQDAFLSQSGQLYLEAAAMAHGKVFSFGPTFRAEKSKTRRHLIEFWMIEGEMAFTNHAESLEIQEQYVTHVVKSVLENCKLELKILERDTSKLEKVATPFPRISYDDAIEFLKAEGFDDIEWGEDFGAPHETAIANHYDLPVFITNYPTKIKPFYMQPNPENEETVLCADLIAPEGYGEIIGGSERVDDLELLEQRVKEHGLDEEAYSYYLDLRRYGSVPHCGFGLGLERTVAWISGVEHVRETAPFPRLLNRLYP.

This sequence belongs to the class-II aminoacyl-tRNA synthetase family. Homodimer.

The protein resides in the cytoplasm. The catalysed reaction is tRNA(Asn) + L-asparagine + ATP = L-asparaginyl-tRNA(Asn) + AMP + diphosphate + H(+). The polypeptide is Asparagine--tRNA ligase (Staphylococcus aureus (strain USA300)).